The following is a 494-amino-acid chain: UDP-N-acetylmuramoyl-L-alanyl-D-glutamate--2,6-diaminopimelate ligase (494 aa).

S32 is a UDP-N-acetyl-alpha-D-muramoyl-L-alanyl-D-glutamate binding site. 112–118 (GTNGKTT) serves as a coordination point for ATP. UDP-N-acetyl-alpha-D-muramoyl-L-alanyl-D-glutamate contacts are provided by residues N153, 154-155 (TT), S181, and R189. K221 carries the post-translational modification N6-carboxylysine. Meso-2,6-diaminopimelate contacts are provided by residues R383, 407–410 (DNPR), G459, and E463. A Meso-diaminopimelate recognition motif motif is present at residues 407 to 410 (DNPR).

Belongs to the MurCDEF family. MurE subfamily. Mg(2+) serves as cofactor. In terms of processing, carboxylation is probably crucial for Mg(2+) binding and, consequently, for the gamma-phosphate positioning of ATP.

Its subcellular location is the cytoplasm. It catalyses the reaction UDP-N-acetyl-alpha-D-muramoyl-L-alanyl-D-glutamate + meso-2,6-diaminopimelate + ATP = UDP-N-acetyl-alpha-D-muramoyl-L-alanyl-gamma-D-glutamyl-meso-2,6-diaminopimelate + ADP + phosphate + H(+). It participates in cell wall biogenesis; peptidoglycan biosynthesis. In terms of biological role, catalyzes the addition of meso-diaminopimelic acid to the nucleotide precursor UDP-N-acetylmuramoyl-L-alanyl-D-glutamate (UMAG) in the biosynthesis of bacterial cell-wall peptidoglycan. The protein is UDP-N-acetylmuramoyl-L-alanyl-D-glutamate--2,6-diaminopimelate ligase of Solibacter usitatus (strain Ellin6076).